We begin with the raw amino-acid sequence, 326 residues long: Protein SEH1 (326 aa).

WD repeat units lie at residues 7–46 (TLDSGTTCSSWNQSGDRLAAGSLNGKLSIYESSTSSSSTF), 54–95 (VSES…AHGL), 105–146 (NKSS…ELKN), 224–266 (DKGD…DLEG), and 278–317 (GHQGEVWQMEWDMSGMTLASTGSDGMVKLWQSNLNGEWHE).

The protein belongs to the WD repeat SEC13 family. Part of the nuclear pore complex (NPC). The NPC has an eight-fold symmetrical structure comprising a central transport channel and two rings, the cytoplasmic and nuclear rings, to which eight filaments are attached. The cytoplasmic filaments have loose ends, while the nuclear filaments are joined in a distal ring, forming a nuclear basket. NPCs are highly dynamic in configuration and composition, and can be devided in 3 subcomplexes, the NUP62 subcomplex, the NUP107-160 subcomplex and the NUP93 subcomplex, containing approximately 30 different nucleoporin proteins.

The protein resides in the nucleus envelope. The protein localises to the nucleus. It localises to the cytoplasm. It is found in the nuclear pore complex. Its function is as follows. Required for proper export of mRNAs from the nucleus to the cytoplasm. This Arabidopsis thaliana (Mouse-ear cress) protein is Protein SEH1.